The following is a 138-amino-acid chain: Ribosome-binding factor A (138 aa).

This sequence belongs to the RbfA family. As to quaternary structure, monomer. Binds 30S ribosomal subunits, but not 50S ribosomal subunits or 70S ribosomes.

The protein resides in the cytoplasm. In terms of biological role, one of several proteins that assist in the late maturation steps of the functional core of the 30S ribosomal subunit. Associates with free 30S ribosomal subunits (but not with 30S subunits that are part of 70S ribosomes or polysomes). Required for efficient processing of 16S rRNA. May interact with the 5'-terminal helix region of 16S rRNA. The protein is Ribosome-binding factor A of Chromobacterium violaceum (strain ATCC 12472 / DSM 30191 / JCM 1249 / CCUG 213 / NBRC 12614 / NCIMB 9131 / NCTC 9757 / MK).